A 173-amino-acid chain; its full sequence is Lens fiber membrane intrinsic protein (173 aa).

Residues 1–3 lie on the Cytoplasmic side of the membrane; the sequence is MYS. Residues 4–24 traverse the membrane as a helical segment; sequence FMGGGLFCAWVGTILLVVATA. At 25-66 the chain is on the extracellular side; it reads TDHWMQYRLSGSFAHQGLWRYCLGNKCFLQTESIAYWNATRA. C-linked (Man) tryptophan glycans are attached at residues Trp-43 and Trp-61. The N-linked (GlcNAc...) asparagine glycan is linked to Asn-62. A helical transmembrane segment spans residues 67–87; that stretch reads FMILSALCATSGIIMGVLAFA. The Cytoplasmic segment spans residues 88–98; that stretch reads QQSTFTRLSRP. The chain crosses the membrane as a helical span at residues 99–119; it reads FSAGIMFFASTLFVLLALAIY. The Extracellular portion of the chain corresponds to 120–140; that stretch reads TGVTVSFLGRRFGDWRFSWSY. The helical transmembrane segment at 141–161 threads the bilayer; that stretch reads ILGWVALLMTFFAGIFYMCAY. At 162-173 the chain is on the cytoplasmic side; sequence RMHECRRLSTPR. Position 170 is a phosphoserine (Ser-170). Thr-171 is modified (phosphothreonine).

It belongs to the PMP-22/EMP/MP20 family. In terms of assembly, seems to be associated with itself or another lens membrane component via disulfide bonds. As to expression, eye lens specific.

The protein localises to the membrane. Present in the thicker 16-17 nm junctions of mammalian lens fiber cells, where it may contribute to cell junctional organization. Acts as a receptor for calmodulin. May play an important role in both lens development and cataractogenesis. The chain is Lens fiber membrane intrinsic protein (Lim2) from Rattus norvegicus (Rat).